We begin with the raw amino-acid sequence, 367 residues long: Riboflavin biosynthesis protein RibD (367 aa).

Residues 1–123 form the CMP/dCMP-type deaminase domain; that stretch reads MQDEYYMARA…RLQQAGIDVS (123 aa). A deaminase region spans residues 1–145; it reads MQDEYYMARA…KGFLKRMRTG (145 aa). A Zn(2+)-binding site is contributed by His-50. The active-site Proton donor is Glu-52. Residues Cys-75 and Cys-84 each coordinate Zn(2+). The interval 146–367 is reductase; that stretch reads FPYIQLKLGA…PDVCLHLVGA (222 aa). 161–164 provides a ligand contact to NADP(+); sequence TAMA. Ser-168 is a binding site for substrate. Trp-170 serves as a coordination point for NADP(+). Arg-184 is a binding site for substrate. NADP(+)-binding residues include Thr-196 and Asp-200. Residues Leu-204 and Arg-207 each contribute to the substrate site. Ser-234 serves as a coordination point for NADP(+). Glu-299 is a binding site for substrate. Residue 301 to 304 coordinates NADP(+); sequence GPTL.

This sequence in the N-terminal section; belongs to the cytidine and deoxycytidylate deaminase family. The protein in the C-terminal section; belongs to the HTP reductase family. In terms of assembly, homodimer. Requires Zn(2+) as cofactor.

The enzyme catalyses 2,5-diamino-6-hydroxy-4-(5-phosphoribosylamino)-pyrimidine + H2O + H(+) = 5-amino-6-(5-phospho-D-ribosylamino)uracil + NH4(+). It carries out the reaction 5-amino-6-(5-phospho-D-ribitylamino)uracil + NADP(+) = 5-amino-6-(5-phospho-D-ribosylamino)uracil + NADPH + H(+). Its pathway is cofactor biosynthesis; riboflavin biosynthesis; 5-amino-6-(D-ribitylamino)uracil from GTP: step 2/4. It participates in cofactor biosynthesis; riboflavin biosynthesis; 5-amino-6-(D-ribitylamino)uracil from GTP: step 3/4. Converts 2,5-diamino-6-(ribosylamino)-4(3h)-pyrimidinone 5'-phosphate into 5-amino-6-(ribosylamino)-2,4(1h,3h)-pyrimidinedione 5'-phosphate. The protein is Riboflavin biosynthesis protein RibD (ribD) of Escherichia coli (strain K12).